Here is a 217-residue protein sequence, read N- to C-terminus: Nucleoside diphosphate kinase homolog 5 (217 aa).

Positions 18 to 151 (ERTLALIKPD…REIRFMFPHS (134 aa)) are NDK.

It belongs to the NDK family.

The protein resides in the cell projection. It is found in the cilium. In terms of biological role, functions as part of axonemal radial spoke complexes that play an important part in the motility of sperm and cilia. Does not seem to have nucleoside diphosphate kinase (NDPK) activity. Exhibits a 3'-5' exonuclease activity with a preference for single-stranded DNA, suggesting roles in DNA proofreading and repair. This is Nucleoside diphosphate kinase homolog 5 (nme5) from Danio rerio (Zebrafish).